Consider the following 85-residue polypeptide: MGSFSIWHWLIVLLIIMMVFGTKKLRNIGSDLGSAVKGFKEGMREGSEDKPAGSQQGQQAAGQPPRELHDSTTIDVEARDKSKQG.

The chain crosses the membrane as a helical span at residues 1–21 (MGSFSIWHWLIVLLIIMMVFG). The span at 39-51 (FKEGMREGSEDKP) shows a compositional bias: basic and acidic residues. Residues 39–85 (FKEGMREGSEDKPAGSQQGQQAAGQPPRELHDSTTIDVEARDKSKQG) are disordered. Low complexity predominate over residues 52-65 (AGSQQGQQAAGQPP). Residues 66–85 (RELHDSTTIDVEARDKSKQG) show a composition bias toward basic and acidic residues.

Belongs to the TatA/E family. The Tat system comprises two distinct complexes: a TatABC complex, containing multiple copies of TatA, TatB and TatC subunits, and a separate TatA complex, containing only TatA subunits. Substrates initially bind to the TatABC complex, which probably triggers association of the separate TatA complex to form the active translocon.

It localises to the cell inner membrane. Functionally, part of the twin-arginine translocation (Tat) system that transports large folded proteins containing a characteristic twin-arginine motif in their signal peptide across membranes. TatA could form the protein-conducting channel of the Tat system. The polypeptide is Sec-independent protein translocase protein TatA (Ralstonia nicotianae (strain ATCC BAA-1114 / GMI1000) (Ralstonia solanacearum)).